A 547-amino-acid polypeptide reads, in one-letter code: Glucose-6-phosphate isomerase (547 aa).

Glutamate 353 functions as the Proton donor in the catalytic mechanism. Active-site residues include histidine 384 and lysine 512.

It belongs to the GPI family.

The protein localises to the cytoplasm. It catalyses the reaction alpha-D-glucose 6-phosphate = beta-D-fructose 6-phosphate. It functions in the pathway carbohydrate biosynthesis; gluconeogenesis. The protein operates within carbohydrate degradation; glycolysis; D-glyceraldehyde 3-phosphate and glycerone phosphate from D-glucose: step 2/4. In terms of biological role, catalyzes the reversible isomerization of glucose-6-phosphate to fructose-6-phosphate. This Glaesserella parasuis serovar 5 (strain SH0165) (Haemophilus parasuis) protein is Glucose-6-phosphate isomerase.